A 1020-amino-acid polypeptide reads, in one-letter code: 26S proteasome non-ATPase regulatory subunit 1 (1020 aa).

The interval 279 to 322 (TALPSTFKPQGTTSEDGAKSEGDKSKSDEDITEETPADDKVERT) is disordered. The segment covering 281-293 (LPSTFKPQGTTSE) has biased composition (polar residues). At Thr-291 the chain carries Phosphothreonine. Basic and acidic residues predominate over residues 294–307 (DGAKSEGDKSKSDE). Phosphoserine is present on residues Ser-298, Ser-303, and Ser-305. Phosphothreonine is present on Thr-310. PC repeat units lie at residues 418–452 (TATA…SSGY), 456–489 (GALY…ENVR), 491–525 (GGCL…VTGE), 526–560 (AAGI…EKIL), 562–595 (GLAV…VLRR), 596–631 (SGMY…DVRR), 632–664 (AAVT…PHVR), 666–701 (GAAM…FVRQ), 702–742 (GALI…DVMA), and 745–777 (GAIL…QAVV). 2 disordered regions span residues 855–950 (QKRR…NPAR) and 999–1020 (FGPM…YIED). 2 stretches are compositionally biased toward basic and acidic residues: residues 858-867 (RENADKKEDE) and 876-939 (KEGA…KEPE). The segment covering 1003 to 1020 (NDEEKEPEPPEPFEYIED) has biased composition (acidic residues).

This sequence belongs to the proteasome subunit S1 family.

Functionally, acts as a regulatory subunit of the 26S proteasome which is involved in the ATP-dependent degradation of ubiquitinated proteins. This Drosophila melanogaster (Fruit fly) protein is 26S proteasome non-ATPase regulatory subunit 1 (Rpn2).